Reading from the N-terminus, the 213-residue chain is Outer envelope pore protein 24B, chloroplastic (213 aa).

Residues Met-1–Met-3 lie on the Cytoplasmic side of the membrane. The beta stranded transmembrane segment at Lys-4–Thr-13 threads the bilayer. Residues Asp-14 to Gly-18 are Chloroplast intermembrane-facing. The chain crosses the membrane as a beta stranded span at residues Ile-19 to Asp-28. Over Ile-29–Arg-32 the chain is Cytoplasmic. Residues Ala-33 to Ala-42 traverse the membrane as a beta stranded segment. The Chloroplast intermembrane portion of the chain corresponds to Gly-43–Lys-55. Residues Pro-56–Asn-64 form a beta stranded membrane-spanning segment. Topologically, residues Val-65 to Val-70 are cytoplasmic. A beta stranded membrane pass occupies residues Arg-71–Ile-80. Over Ala-81–Arg-93 the chain is Chloroplast intermembrane. The chain crosses the membrane as a beta stranded span at residues Ala-94–Ser-103. The Cytoplasmic portion of the chain corresponds to Leu-104–Ser-108. The beta stranded transmembrane segment at Ala-109–Val-118 threads the bilayer. The Chloroplast intermembrane portion of the chain corresponds to Gly-119 to Asn-122. The beta stranded transmembrane segment at Cys-123 to Gly-132 threads the bilayer. Over Gly-133 to Ala-144 the chain is Cytoplasmic. Residues Lys-145–Phe-156 traverse the membrane as a beta stranded segment. Residues Tyr-157 to Gly-159 are Chloroplast intermembrane-facing. Residues Asp-160–Thr-168 traverse the membrane as a beta stranded segment. Over Ser-169 to Ser-170 the chain is Cytoplasmic. A beta stranded transmembrane segment spans residues Lys-171 to Arg-179. Residues Asn-180–Pro-201 lie on the Chloroplast intermembrane side of the membrane. The chain crosses the membrane as a beta stranded span at residues Lys-202 to Leu-211. Topologically, residues Glu-212 to Met-213 are cytoplasmic.

Belongs to the plastid outer envelope porin OEP24 (TC 1.B.28) family. As to quaternary structure, homooligomers form large rather nonselective pores in plastidial outer membranes.

It is found in the plastid. Its subcellular location is the etioplast membrane. The protein localises to the chloroplast outer membrane. High-conductance voltage-dependent solute channel with a slight selectivity for cations transporting triosephosphates, dicarboxylic acids, ATP, inorganic phosphate (Pi), sugars, and positively or negatively charged amino acids. The sequence is that of Outer envelope pore protein 24B, chloroplastic (OEP24B) from Arabidopsis thaliana (Mouse-ear cress).